Reading from the N-terminus, the 638-residue chain is Phosphomethylpyrimidine synthase (638 aa).

Residues Asn236, Met265, Tyr294, His330, 350–352 (SRG), 391–394 (DGLR), and Glu430 contribute to the substrate site. His434 serves as a coordination point for Zn(2+). Substrate is bound at residue Tyr457. His498 contributes to the Zn(2+) binding site. 3 residues coordinate [4Fe-4S] cluster: Cys578, Cys581, and Cys586.

Belongs to the ThiC family. As to quaternary structure, homodimer. The cofactor is [4Fe-4S] cluster.

The enzyme catalyses 5-amino-1-(5-phospho-beta-D-ribosyl)imidazole + S-adenosyl-L-methionine = 4-amino-2-methyl-5-(phosphooxymethyl)pyrimidine + CO + 5'-deoxyadenosine + formate + L-methionine + 3 H(+). It functions in the pathway cofactor biosynthesis; thiamine diphosphate biosynthesis. Its function is as follows. Catalyzes the synthesis of the hydroxymethylpyrimidine phosphate (HMP-P) moiety of thiamine from aminoimidazole ribotide (AIR) in a radical S-adenosyl-L-methionine (SAM)-dependent reaction. In Polaromonas sp. (strain JS666 / ATCC BAA-500), this protein is Phosphomethylpyrimidine synthase.